Consider the following 287-residue polypeptide: 4-diphosphocytidyl-2-C-methyl-D-erythritol kinase (287 aa).

The active site involves lysine 11. 93-103 (PFGAGLGGGSS) contributes to the ATP binding site. Aspartate 135 is an active-site residue.

This sequence belongs to the GHMP kinase family. IspE subfamily.

The catalysed reaction is 4-CDP-2-C-methyl-D-erythritol + ATP = 4-CDP-2-C-methyl-D-erythritol 2-phosphate + ADP + H(+). It functions in the pathway isoprenoid biosynthesis; isopentenyl diphosphate biosynthesis via DXP pathway; isopentenyl diphosphate from 1-deoxy-D-xylulose 5-phosphate: step 3/6. In terms of biological role, catalyzes the phosphorylation of the position 2 hydroxy group of 4-diphosphocytidyl-2C-methyl-D-erythritol. This chain is 4-diphosphocytidyl-2-C-methyl-D-erythritol kinase, found in Chlorobium luteolum (strain DSM 273 / BCRC 81028 / 2530) (Pelodictyon luteolum).